The chain runs to 79 residues: WAP four-disulfide core domain protein 10A (79 aa).

Positions 1-21 (MAPQTLLPVLVLCVLLLQAQG) are cleaved as a signal peptide. Residues 34 to 79 (LSPEIKVCQQQPKLYLCKHLCESHRDCQANNICCSTYCGNVCMSIL) enclose the WAP domain. Intrachain disulfides connect cysteine 41–cysteine 67, cysteine 50–cysteine 71, cysteine 54–cysteine 66, and cysteine 60–cysteine 75.

The protein resides in the secreted. This Homo sapiens (Human) protein is WAP four-disulfide core domain protein 10A (WFDC10A).